The chain runs to 115 residues: Iron-sulfur cluster insertion protein ErpA (115 aa).

Residues Cys-42, Cys-106, and Cys-108 each coordinate iron-sulfur cluster.

The protein belongs to the HesB/IscA family. In terms of assembly, homodimer. Iron-sulfur cluster is required as a cofactor.

In terms of biological role, required for insertion of 4Fe-4S clusters for at least IspG. The polypeptide is Iron-sulfur cluster insertion protein ErpA (Baumannia cicadellinicola subsp. Homalodisca coagulata).